The sequence spans 321 residues: Putative ankyrin repeat domain-containing protein 26-like protein (321 aa).

ANK repeat units follow at residues 48–78 (KHLGKLHRAASRGEVSKVECILSSGSADLDE), 82–111 (KKRTALHLACANGHPEVVALLVDRGCQLDV), 115–144 (KNRTALLKAVQCQEEECATILLEHGADPDL), 148–177 (YGNTTLHYAIYNEDIPMTKKLLLHHANIES), and 181–210 (DELTPFLLAVHEQKQQMEDFLRKQKENLTA). 2 disordered regions span residues 222–242 (EYKENETPRNPQNSNPEGTSN) and 268–321 (FNKP…NENI). Residues 229–242 (PRNPQNSNPEGTSN) show a composition bias toward polar residues.

The sequence is that of Putative ankyrin repeat domain-containing protein 26-like protein (ANKRD26P1) from Homo sapiens (Human).